Here is a 350-residue protein sequence, read N- to C-terminus: UDP-3-O-acylglucosamine N-acyltransferase (350 aa).

H244 functions as the Proton acceptor in the catalytic mechanism.

It belongs to the transferase hexapeptide repeat family. LpxD subfamily. As to quaternary structure, homotrimer.

It catalyses the reaction a UDP-3-O-[(3R)-3-hydroxyacyl]-alpha-D-glucosamine + a (3R)-hydroxyacyl-[ACP] = a UDP-2-N,3-O-bis[(3R)-3-hydroxyacyl]-alpha-D-glucosamine + holo-[ACP] + H(+). The protein operates within bacterial outer membrane biogenesis; LPS lipid A biosynthesis. In terms of biological role, catalyzes the N-acylation of UDP-3-O-acylglucosamine using 3-hydroxyacyl-ACP as the acyl donor. Is involved in the biosynthesis of lipid A, a phosphorylated glycolipid that anchors the lipopolysaccharide to the outer membrane of the cell. The chain is UDP-3-O-acylglucosamine N-acyltransferase from Janthinobacterium sp. (strain Marseille) (Minibacterium massiliensis).